The primary structure comprises 101 residues: NAD(P)H-quinone oxidoreductase subunit 4L, chloroplastic (101 aa).

Transmembrane regions (helical) follow at residues 2 to 22 (IFEHALVLSAYLFSIGIYGLI), 32 to 52 (MCLELILNAVNINLVTFSDFF), and 61 to 81 (IFSIFVIAIAAAEAAIGPAIV).

It belongs to the complex I subunit 4L family. NDH is composed of at least 16 different subunits, 5 of which are encoded in the nucleus.

It localises to the plastid. It is found in the chloroplast thylakoid membrane. It catalyses the reaction a plastoquinone + NADH + (n+1) H(+)(in) = a plastoquinol + NAD(+) + n H(+)(out). The enzyme catalyses a plastoquinone + NADPH + (n+1) H(+)(in) = a plastoquinol + NADP(+) + n H(+)(out). NDH shuttles electrons from NAD(P)H:plastoquinone, via FMN and iron-sulfur (Fe-S) centers, to quinones in the photosynthetic chain and possibly in a chloroplast respiratory chain. The immediate electron acceptor for the enzyme in this species is believed to be plastoquinone. Couples the redox reaction to proton translocation, and thus conserves the redox energy in a proton gradient. The polypeptide is NAD(P)H-quinone oxidoreductase subunit 4L, chloroplastic (Glycine max (Soybean)).